We begin with the raw amino-acid sequence, 213 residues long: MQPYQRDFIRFAIDRGVLRFGEFTLKSGRTSPYFFNAGLFNTGSALAQLGRCYAAAIVDSKIPFDVLFGPAYKGIPLAAATAVALAEQHQLDVPWCFNRKEAKDHGEGGSLVGAPLAGDVLIIDDVITAGTAIREVMQIINAQQAKAAGVLIALNREERGNGELSAIQEVERDFGIPVVSIVSLTQVLEFLADDPQLKQHLPAVEAYRAQYGI.

5-phospho-alpha-D-ribose 1-diphosphate is bound at residue Lys-26. 34–35 (FF) lines the orotate pocket. Residues 72 to 73 (YK), Arg-99, Lys-100, Lys-103, His-105, and 124 to 132 (DDVITAGTA) each bind 5-phospho-alpha-D-ribose 1-diphosphate. Orotate contacts are provided by Thr-128 and Arg-156.

This sequence belongs to the purine/pyrimidine phosphoribosyltransferase family. PyrE subfamily. In terms of assembly, homodimer. It depends on Mg(2+) as a cofactor.

The enzyme catalyses orotidine 5'-phosphate + diphosphate = orotate + 5-phospho-alpha-D-ribose 1-diphosphate. Its pathway is pyrimidine metabolism; UMP biosynthesis via de novo pathway; UMP from orotate: step 1/2. Functionally, catalyzes the transfer of a ribosyl phosphate group from 5-phosphoribose 1-diphosphate to orotate, leading to the formation of orotidine monophosphate (OMP). In Pseudomonas putida (strain W619), this protein is Orotate phosphoribosyltransferase.